The primary structure comprises 342 residues: Holliday junction branch migration complex subunit RuvB (342 aa).

A large ATPase domain (RuvB-L) region spans residues 1–181 (MENRMVTPFD…FGMLCAMEFY (181 aa)). Residues Leu-20, Arg-21, Gly-62, Lys-65, Thr-66, Thr-67, 128–130 (EDY), Arg-171, Tyr-181, and Arg-218 contribute to the ATP site. Residue Thr-66 participates in Mg(2+) binding. A small ATPAse domain (RuvB-S) region spans residues 182–252 (TDEELMEIVV…GAKAALDLLE (71 aa)). Positions 255 to 342 (KEGLDKIDNK…KDNQVSIFNK (88 aa)) are head domain (RuvB-H). The DNA site is built by Arg-310 and Arg-315.

The protein belongs to the RuvB family. Homohexamer. Forms an RuvA(8)-RuvB(12)-Holliday junction (HJ) complex. HJ DNA is sandwiched between 2 RuvA tetramers; dsDNA enters through RuvA and exits via RuvB. An RuvB hexamer assembles on each DNA strand where it exits the tetramer. Each RuvB hexamer is contacted by two RuvA subunits (via domain III) on 2 adjacent RuvB subunits; this complex drives branch migration. In the full resolvosome a probable DNA-RuvA(4)-RuvB(12)-RuvC(2) complex forms which resolves the HJ.

It localises to the cytoplasm. The catalysed reaction is ATP + H2O = ADP + phosphate + H(+). Functionally, the RuvA-RuvB-RuvC complex processes Holliday junction (HJ) DNA during genetic recombination and DNA repair, while the RuvA-RuvB complex plays an important role in the rescue of blocked DNA replication forks via replication fork reversal (RFR). RuvA specifically binds to HJ cruciform DNA, conferring on it an open structure. The RuvB hexamer acts as an ATP-dependent pump, pulling dsDNA into and through the RuvAB complex. RuvB forms 2 homohexamers on either side of HJ DNA bound by 1 or 2 RuvA tetramers; 4 subunits per hexamer contact DNA at a time. Coordinated motions by a converter formed by DNA-disengaged RuvB subunits stimulates ATP hydrolysis and nucleotide exchange. Immobilization of the converter enables RuvB to convert the ATP-contained energy into a lever motion, pulling 2 nucleotides of DNA out of the RuvA tetramer per ATP hydrolyzed, thus driving DNA branch migration. The RuvB motors rotate together with the DNA substrate, which together with the progressing nucleotide cycle form the mechanistic basis for DNA recombination by continuous HJ branch migration. Branch migration allows RuvC to scan DNA until it finds its consensus sequence, where it cleaves and resolves cruciform DNA. The chain is Holliday junction branch migration complex subunit RuvB from Clostridium botulinum (strain Loch Maree / Type A3).